The primary structure comprises 367 residues: AdoMet-dependent heme synthase (367 aa).

Residues 15-238 enclose the Radical SAM core domain; it reads DGSPTCKLIA…TSMHLKATCA (224 aa). Cys31, Cys35, and Cys38 together coordinate [4Fe-4S] cluster.

It belongs to the radical SAM superfamily. [4Fe-4S] cluster is required as a cofactor.

The enzyme catalyses Fe-coproporphyrin III + 2 S-adenosyl-L-methionine = heme b + 2 5'-deoxyadenosine + 2 L-methionine + 2 CO2. It participates in porphyrin-containing compound metabolism; protoheme biosynthesis. Functionally, involved in siroheme-dependent heme b biosynthesis. Catalyzes the conversion of Fe-coproporphyrin III into heme by the oxidative decarboxylation of two propionate side chains. The chain is AdoMet-dependent heme synthase from Nitratidesulfovibrio vulgaris (strain ATCC 29579 / DSM 644 / CCUG 34227 / NCIMB 8303 / VKM B-1760 / Hildenborough) (Desulfovibrio vulgaris).